The primary structure comprises 280 residues: Urease accessory protein UreD (280 aa).

It belongs to the UreD family. As to quaternary structure, ureD, UreF and UreG form a complex that acts as a GTP-hydrolysis-dependent molecular chaperone, activating the urease apoprotein by helping to assemble the nickel containing metallocenter of UreC. The UreE protein probably delivers the nickel.

It localises to the cytoplasm. In terms of biological role, required for maturation of urease via the functional incorporation of the urease nickel metallocenter. This is Urease accessory protein UreD from Pseudomonas aeruginosa (strain ATCC 15692 / DSM 22644 / CIP 104116 / JCM 14847 / LMG 12228 / 1C / PRS 101 / PAO1).